Reading from the N-terminus, the 337-residue chain is Aspartate carbamoyltransferase catalytic subunit (337 aa).

The carbamoyl phosphate site is built by arginine 59 and threonine 60. Lysine 87 is a binding site for L-aspartate. Arginine 109, histidine 142, and glutamine 145 together coordinate carbamoyl phosphate. L-aspartate is bound by residues arginine 182 and arginine 253. Positions 294 and 295 each coordinate carbamoyl phosphate.

This sequence belongs to the aspartate/ornithine carbamoyltransferase superfamily. ATCase family. As to quaternary structure, heterododecamer (2C3:3R2) of six catalytic PyrB chains organized as two trimers (C3), and six regulatory PyrI chains organized as three dimers (R2).

It catalyses the reaction carbamoyl phosphate + L-aspartate = N-carbamoyl-L-aspartate + phosphate + H(+). Its pathway is pyrimidine metabolism; UMP biosynthesis via de novo pathway; (S)-dihydroorotate from bicarbonate: step 2/3. In terms of biological role, catalyzes the condensation of carbamoyl phosphate and aspartate to form carbamoyl aspartate and inorganic phosphate, the committed step in the de novo pyrimidine nucleotide biosynthesis pathway. This Prochlorococcus marinus (strain MIT 9211) protein is Aspartate carbamoyltransferase catalytic subunit.